The following is a 475-amino-acid chain: Sulfate adenylyltransferase subunit 1 (475 aa).

One can recognise a tr-type G domain in the interval 24-240; it reads KSLLRFLTCG…ESAEVERELE (217 aa). Residues 33–40 form a G1 region; it reads GSVDDGKS. A GTP-binding site is contributed by 33–40; sequence GSVDDGKS. Residues 91 to 95 form a G2 region; that stretch reads GITID. The interval 112 to 115 is G3; that stretch reads DTPG. Residues 112–116 and 167–170 each bind GTP; these read DTPGH and NKMD. The G4 stretch occupies residues 167 to 170; the sequence is NKMD. The segment at 204-206 is G5; it reads SAL.

The protein belongs to the TRAFAC class translation factor GTPase superfamily. Classic translation factor GTPase family. CysN/NodQ subfamily. Heterodimer composed of CysD, the smaller subunit, and CysN.

The enzyme catalyses sulfate + ATP + H(+) = adenosine 5'-phosphosulfate + diphosphate. Its pathway is sulfur metabolism; hydrogen sulfide biosynthesis; sulfite from sulfate: step 1/3. Its function is as follows. With CysD forms the ATP sulfurylase (ATPS) that catalyzes the adenylation of sulfate producing adenosine 5'-phosphosulfate (APS) and diphosphate, the first enzymatic step in sulfur assimilation pathway. APS synthesis involves the formation of a high-energy phosphoric-sulfuric acid anhydride bond driven by GTP hydrolysis by CysN coupled to ATP hydrolysis by CysD. The sequence is that of Sulfate adenylyltransferase subunit 1 from Aeromonas hydrophila subsp. hydrophila (strain ATCC 7966 / DSM 30187 / BCRC 13018 / CCUG 14551 / JCM 1027 / KCTC 2358 / NCIMB 9240 / NCTC 8049).